A 447-amino-acid polypeptide reads, in one-letter code: Phosphoglucosamine mutase (447 aa).

The active-site Phosphoserine intermediate is the S104. Positions 104, 243, 245, and 247 each coordinate Mg(2+). Position 104 is a phosphoserine (S104).

This sequence belongs to the phosphohexose mutase family. The cofactor is Mg(2+). Post-translationally, activated by phosphorylation.

The catalysed reaction is alpha-D-glucosamine 1-phosphate = D-glucosamine 6-phosphate. Catalyzes the conversion of glucosamine-6-phosphate to glucosamine-1-phosphate. The protein is Phosphoglucosamine mutase of Corynebacterium diphtheriae (strain ATCC 700971 / NCTC 13129 / Biotype gravis).